The chain runs to 337 residues: UDP-3-O-acylglucosamine N-acyltransferase (337 aa).

Catalysis depends on histidine 238, which acts as the Proton acceptor.

This sequence belongs to the transferase hexapeptide repeat family. LpxD subfamily. As to quaternary structure, homotrimer.

The enzyme catalyses a UDP-3-O-[(3R)-3-hydroxyacyl]-alpha-D-glucosamine + a (3R)-hydroxyacyl-[ACP] = a UDP-2-N,3-O-bis[(3R)-3-hydroxyacyl]-alpha-D-glucosamine + holo-[ACP] + H(+). It participates in bacterial outer membrane biogenesis; LPS lipid A biosynthesis. Catalyzes the N-acylation of UDP-3-O-acylglucosamine using 3-hydroxyacyl-ACP as the acyl donor. Is involved in the biosynthesis of lipid A, a phosphorylated glycolipid that anchors the lipopolysaccharide to the outer membrane of the cell. In Xanthomonas axonopodis pv. citri (strain 306), this protein is UDP-3-O-acylglucosamine N-acyltransferase.